The following is a 32-amino-acid chain: Cytochrome b6-f complex subunit 7 (32 aa).

Residues Ala9–Leu27 form a helical membrane-spanning segment.

Belongs to the PetM family. In terms of assembly, the 4 large subunits of the cytochrome b6-f complex are cytochrome b6, subunit IV (17 kDa polypeptide, PetD), cytochrome f and the Rieske protein, while the 4 small subunits are PetG, PetL, PetM and PetN. The complex functions as a dimer.

It is found in the plastid. The protein resides in the chloroplast thylakoid membrane. In terms of biological role, component of the cytochrome b6-f complex, which mediates electron transfer between photosystem II (PSII) and photosystem I (PSI), cyclic electron flow around PSI, and state transitions. This Pyropia yezoensis (Susabi-nori) protein is Cytochrome b6-f complex subunit 7.